The chain runs to 361 residues: Glutamate 5-kinase (361 aa).

Lys7 serves as a coordination point for ATP. Positions 47, 134, and 146 each coordinate substrate. Residues 166-167 (TD) and 209-215 (TGGMTTK) each bind ATP. One can recognise a PUA domain in the interval 274-345 (LGTLQLDEGA…EAIETQMSTN (72 aa)).

It belongs to the glutamate 5-kinase family.

The protein localises to the cytoplasm. The catalysed reaction is L-glutamate + ATP = L-glutamyl 5-phosphate + ADP. It functions in the pathway amino-acid biosynthesis; L-proline biosynthesis; L-glutamate 5-semialdehyde from L-glutamate: step 1/2. Functionally, catalyzes the transfer of a phosphate group to glutamate to form L-glutamate 5-phosphate. This chain is Glutamate 5-kinase, found in Prochlorococcus marinus (strain MIT 9313).